We begin with the raw amino-acid sequence, 318 residues long: Probable pyridoxal 5'-phosphate synthase subunit PDX1.1 (318 aa).

Asp-49 provides a ligand contact to D-ribose 5-phosphate. Residue Lys-106 is the Schiff-base intermediate with D-ribose 5-phosphate of the active site. Gly-178 lines the D-ribose 5-phosphate pocket. A D-glyceraldehyde 3-phosphate-binding site is contributed by Arg-190. Residues Gly-239 and 260–261 each bind D-ribose 5-phosphate; that span reads GS.

Belongs to the PdxS/SNZ family.

It carries out the reaction aldehydo-D-ribose 5-phosphate + D-glyceraldehyde 3-phosphate + L-glutamine = pyridoxal 5'-phosphate + L-glutamate + phosphate + 3 H2O + H(+). The protein operates within cofactor biosynthesis; pyridoxal 5'-phosphate biosynthesis. Catalyzes the formation of pyridoxal 5'-phosphate from ribose 5-phosphate (RBP), glyceraldehyde 3-phosphate (G3P) and ammonia. The ammonia is provided by PDX2. Can also use ribulose 5-phosphate and dihydroxyacetone phosphate as substrates, resulting from enzyme-catalyzed isomerization of RBP and G3P, respectively. Also plays an indirect role in resistance to singlet oxygen-generating photosensitizers. The chain is Probable pyridoxal 5'-phosphate synthase subunit PDX1.1 (PDX11) from Oryza sativa subsp. japonica (Rice).